The primary structure comprises 146 residues: Hemoglobin subunit beta (146 aa).

A Globin domain is found at 2 to 146 (EWTQQERSII…VVFALGRKYH (145 aa)). Heme b contacts are provided by His-63 and His-92.

This sequence belongs to the globin family. As to quaternary structure, heterotetramer of two alpha chains and two beta chains. Red blood cells.

Involved in oxygen transport from gills to the various peripheral tissues. The chain is Hemoglobin subunit beta (hbb) from Thunnus thynnus (Atlantic bluefin tuna).